The sequence spans 543 residues: Chaperonin GroEL (543 aa).

ATP contacts are provided by residues 29 to 32 (TLGP), 86 to 90 (DGTTT), Gly413, 478 to 480 (NAA), and Asp494.

This sequence belongs to the chaperonin (HSP60) family. As to quaternary structure, forms a cylinder of 14 subunits composed of two heptameric rings stacked back-to-back. Interacts with the co-chaperonin GroES.

Its subcellular location is the cytoplasm. It catalyses the reaction ATP + H2O + a folded polypeptide = ADP + phosphate + an unfolded polypeptide.. In terms of biological role, together with its co-chaperonin GroES, plays an essential role in assisting protein folding. The GroEL-GroES system forms a nano-cage that allows encapsulation of the non-native substrate proteins and provides a physical environment optimized to promote and accelerate protein folding. The protein is Chaperonin GroEL of Lactobacillus johnsonii (strain CNCM I-12250 / La1 / NCC 533).